The following is a 316-amino-acid chain: Bifunctional peptidase and (3S)-lysyl hydroxylase Jmjd7 (316 aa).

The JmjC domain occupies 128–307 (VQKQCSNLPT…LKYSYFQLMD (180 aa)). Positions 178, 180, and 277 each coordinate Fe cation.

As to quaternary structure, homodimer; disulfide-linked. Interacts with DRG1 and DRG2. The cofactor is Fe(2+).

Its subcellular location is the nucleus. The protein localises to the cytoplasm. The enzyme catalyses L-lysyl-[protein] + 2-oxoglutarate + O2 = (3S)-3-hydroxy-L-lysyl-[protein] + succinate + CO2. Functionally, bifunctional enzyme that acts both as an endopeptidase and 2-oxoglutarate-dependent monooxygenase. Endopeptidase that cleaves histones N-terminal tails at the carboxyl side of methylated arginine or lysine residues, to generate 'tailless nucleosomes', which may trigger transcription elongation. Preferentially recognizes and cleaves monomethylated and dimethylated arginine residues of histones H2, H3 and H4. After initial cleavage, continues to digest histones tails via its aminopeptidase activity. Additionally, may play a role in protein biosynthesis by modifying the translation machinery. Acts as a Fe(2+) and 2-oxoglutarate-dependent monooxygenase, catalyzing (S)-stereospecific hydroxylation at C-3 of 'Lys-22' of DRG1 and 'Lys-21' of DRG2 translation factors (TRAFAC), promoting their interaction with ribonucleic acids (RNA). This is Bifunctional peptidase and (3S)-lysyl hydroxylase Jmjd7 from Mus musculus (Mouse).